Here is a 476-residue protein sequence, read N- to C-terminus: Exodeoxyribonuclease 7 large subunit (476 aa).

Belongs to the XseA family. As to quaternary structure, heterooligomer composed of large and small subunits.

It localises to the cytoplasm. The enzyme catalyses Exonucleolytic cleavage in either 5'- to 3'- or 3'- to 5'-direction to yield nucleoside 5'-phosphates.. In terms of biological role, bidirectionally degrades single-stranded DNA into large acid-insoluble oligonucleotides, which are then degraded further into small acid-soluble oligonucleotides. This Bartonella bacilliformis (strain ATCC 35685 / KC583 / Herrer 020/F12,63) protein is Exodeoxyribonuclease 7 large subunit.